The primary structure comprises 64 residues: Large ribosomal subunit protein uL29 (64 aa).

It belongs to the universal ribosomal protein uL29 family.

This chain is Large ribosomal subunit protein uL29, found in Chloroherpeton thalassium (strain ATCC 35110 / GB-78).